Consider the following 347-residue polypeptide: S-adenosylmethionine:tRNA ribosyltransferase-isomerase (347 aa).

The protein belongs to the QueA family. Monomer.

Its subcellular location is the cytoplasm. The catalysed reaction is 7-aminomethyl-7-carbaguanosine(34) in tRNA + S-adenosyl-L-methionine = epoxyqueuosine(34) in tRNA + adenine + L-methionine + 2 H(+). It participates in tRNA modification; tRNA-queuosine biosynthesis. Its function is as follows. Transfers and isomerizes the ribose moiety from AdoMet to the 7-aminomethyl group of 7-deazaguanine (preQ1-tRNA) to give epoxyqueuosine (oQ-tRNA). This is S-adenosylmethionine:tRNA ribosyltransferase-isomerase from Ectopseudomonas mendocina (strain ymp) (Pseudomonas mendocina).